Reading from the N-terminus, the 62-residue chain is SVNPCCDPVICKPRDGEHCISGPCCNNCKFLNSGTICQRARGDGNHDYCTGITTDCPRNRYN.

A Disintegrin domain is found at 1 to 62 (SVNPCCDPVI…TTDCPRNRYN (62 aa)). 4 disulfide bridges follow: cysteine 5-cysteine 28, cysteine 19-cysteine 25, cysteine 24-cysteine 49, and cysteine 37-cysteine 56. Residues 41–43 (RGD) carry the Cell attachment site motif.

This sequence belongs to the disintegrin family. Dimeric disintegrin subfamily. Heterodimer with subunit B; disulfide-linked. Expressed by the venom gland.

It localises to the secreted. Functionally, may bind to both alpha-IIb/beta-3 (ITGA2B/ITGB3) and alpha-V/beta-3 (ITGAV/ITGB3) integrins, and may inhibit platelet aggregation. The chain is Disintegrin schistatin-like subunit A from Echis carinatus (Saw-scaled viper).